The sequence spans 654 residues: Tetratricopeptide repeat protein 30 homolog (654 aa).

TPR repeat units lie at residues 10 to 43 (DGEYTKTIYTMIKEERFQDAINTLNTIPESSTTR), 44 to 76 (AGLSLLGHCYYQTQDFIEAANCYEHLLNLVPDV), 145 to 178 (ASTKNDEGCLLYQANMYEDALQRYVSALQAGGFN), 180 to 212 (HVAYNAALCHYRRKENSQALNYIAEIVERGIRN), 393 to 426 (CRSATDQNALRMALREYEGALESYLPVAMARAWI), 452 to 485 (SWRLHAAHVLFMRGDRYKEAAAFYEPIVRQNYDD), and 535 to 568 (CIVNLVIGTLYCAKNNYEFGLSRIAHALDGGSGA).

Belongs to the TTC30/dfy-1/fleer family.

The protein localises to the cell projection. It is found in the cilium. Required for polyglutamylation of axonemal tubulin in sensory cilia. Plays a role in anterograde intraflagellar transport (IFT), the process by which cilia precursors are transported from the base of the cilium to the site of their incorporation at the tip. This Anopheles gambiae (African malaria mosquito) protein is Tetratricopeptide repeat protein 30 homolog.